Here is a 121-residue protein sequence, read N- to C-terminus: Heimdall profilin (121 aa).

The protein belongs to the Asgard profilin family.

It is found in the cytoplasm. The protein localises to the cytoskeleton. Binds to actin and affects the structure of the cytoskeleton. At high concentrations inhibits spontaneous rabbit actin nucleation. This strongly suggests this archaea has a profilin-regulated actin system, and actin-type genes can be identified in this organism. The chain is Heimdall profilin from Heimdallarchaeota archaeon (strain LC_2).